A 180-amino-acid polypeptide reads, in one-letter code: Epididymal-specific lipocalin-6 (180 aa).

Positions 1-20 (MGGLLLAALLALVAVPRAQA) are cleaved as a signal peptide. A disulfide bridge links Cys-81 with Cys-174.

It belongs to the calycin superfamily. Lipocalin family.

The protein resides in the secreted. May play a role in male fertility. The chain is Epididymal-specific lipocalin-6 (LCN6) from Macaca mulatta (Rhesus macaque).